The primary structure comprises 408 residues: Putative gustatory receptor 98c (408 aa).

Residues 1–42 (MEMEAKRSRLLTTARPYLQVLSLFGLTPPAEFFTRTLRKRRR) lie on the Cytoplasmic side of the membrane. Residues 43 to 63 (FCWMAGYSLYLIAILLMVFYE) traverse the membrane as a helical segment. Residues 64–92 (FHANIVSLHLEIYKFHVEDFSKVMGRTQK) are Extracellular-facing. Residues 93–113 (FLIVAIATCNQLNILLNYGRL) form a helical membrane-spanning segment. The Cytoplasmic segment spans residues 114 to 146 (GLIYDEIANLDLGIDKSSKNFCGKSHWWSFRLR). Residues 147-167 (LTLSIGLWMVIIIGVIPRLTL) form a helical membrane-spanning segment. The Extracellular portion of the chain corresponds to 168-183 (GRAGPFFHWVNQVLTQ). The helical transmembrane segment at 184-204 (IILIMLQLKGPEYCLFVLLVY) threads the bilayer. Residues 205 to 261 (ELILRTRHVLEQLKDDLEDFDCGARIQELCVTLKQNQLLIGRIWRLVDEIGAYFRWS) are Cytoplasmic-facing. Residues 262 to 282 (MTLLFLYNGLTILHVVNWAII) form a helical membrane-spanning segment. At 283-296 (RSIDPNDCCQLNRL) the chain is on the extracellular side. The helical transmembrane segment at 297 to 317 (GSITFLSFNLLLTCFFSECCV) threads the bilayer. The Cytoplasmic segment spans residues 318–367 (KTYNSISYILHQIGCLPTAEEFQMLKMGLKEYILQMQHLKLLFTCGGLFD). The helical transmembrane segment at 368 to 388 (INIKLFGGMLVTLCGYVIIIV) threads the bilayer. Residues 389 to 408 (QFKIQDFALIGYRQNTSDTS) are Extracellular-facing. Asn-403 carries an N-linked (GlcNAc...) asparagine glycan.

This sequence belongs to the insect chemoreceptor superfamily. Gustatory receptor (GR) family. Gr2a subfamily.

It is found in the cell membrane. Functionally, probable gustatory receptor which mediates acceptance or avoidance behavior, depending on its substrates. The chain is Putative gustatory receptor 98c (Gr98c) from Drosophila melanogaster (Fruit fly).